A 717-amino-acid polypeptide reads, in one-letter code: Glycine--tRNA ligase beta subunit (717 aa).

The protein belongs to the class-II aminoacyl-tRNA synthetase family. As to quaternary structure, tetramer of two alpha and two beta subunits.

The protein localises to the cytoplasm. The catalysed reaction is tRNA(Gly) + glycine + ATP = glycyl-tRNA(Gly) + AMP + diphosphate. This chain is Glycine--tRNA ligase beta subunit, found in Gloeothece citriformis (strain PCC 7424) (Cyanothece sp. (strain PCC 7424)).